We begin with the raw amino-acid sequence, 202 residues long: LexA repressor (202 aa).

The H-T-H motif DNA-binding region spans 28-48; it reads RAEIAQRLGFRSPNAAEEHLK. Catalysis depends on for autocatalytic cleavage activity residues serine 119 and lysine 156.

This sequence belongs to the peptidase S24 family. In terms of assembly, homodimer.

It catalyses the reaction Hydrolysis of Ala-|-Gly bond in repressor LexA.. Represses a number of genes involved in the response to DNA damage (SOS response), including recA and lexA. Binds to the 16 bp palindromic sequence 5'-CTGTATATATATACAG-3'. In the presence of single-stranded DNA, RecA interacts with LexA causing an autocatalytic cleavage which disrupts the DNA-binding part of LexA, leading to derepression of the SOS regulon and eventually DNA repair. The protein is LexA repressor of Cronobacter sakazakii (strain ATCC BAA-894) (Enterobacter sakazakii).